The primary structure comprises 529 residues: DEP domain-containing protein 1B (529 aa).

The region spanning 24-108 (FRAGMPLRKH…DDGHLYRFPP (85 aa)) is the DEP domain. The Rho-GAP domain maps to 192-393 (ARLQKVLGLD…FLMDNYQEIL (202 aa)).

This is DEP domain-containing protein 1B (DEPDC1B) from Gallus gallus (Chicken).